The following is a 582-amino-acid chain: Transcription factor PCF5 (582 aa).

Disordered stretches follow at residues 30–78 and 123–195; these read AAGK…QHDH and SPMG…GGGG. The segment covering 51 to 64 has biased composition (gly residues); that stretch reads GGDGGGVGGGGSGG. Positions 213–271 constitute a TCP domain; sequence RKDRHSKVCTARGPRDRRVRLSAHTAIQFYDVQDRLGYDRPSKAVDWLIKNAKDAIDKL. Disordered regions lie at residues 283 to 306, 402 to 423, and 548 to 582; these read GAGA…ENSD, MFHH…TTQQ, and RLPA…ASHH.

In terms of assembly, forms homodimers and heterodimers with PCF2.

The protein localises to the nucleus. Transcription activator. Binds the promoter core sequence 5'-GGNCC-3'. The sequence is that of Transcription factor PCF5 (PCF5) from Oryza sativa subsp. indica (Rice).